Consider the following 415-residue polypeptide: Gamma-glutamyl phosphate reductase (415 aa).

This sequence belongs to the gamma-glutamyl phosphate reductase family.

The protein localises to the cytoplasm. It carries out the reaction L-glutamate 5-semialdehyde + phosphate + NADP(+) = L-glutamyl 5-phosphate + NADPH + H(+). The protein operates within amino-acid biosynthesis; L-proline biosynthesis; L-glutamate 5-semialdehyde from L-glutamate: step 2/2. In terms of biological role, catalyzes the NADPH-dependent reduction of L-glutamate 5-phosphate into L-glutamate 5-semialdehyde and phosphate. The product spontaneously undergoes cyclization to form 1-pyrroline-5-carboxylate. The polypeptide is Gamma-glutamyl phosphate reductase (Mycolicibacterium gilvum (strain PYR-GCK) (Mycobacterium gilvum (strain PYR-GCK))).